Reading from the N-terminus, the 97-residue chain is Type VII secretion system extracellular protein A (97 aa).

Positions 61–93 (KVEKFAQLLEEIKQQLNSTADAVQEQDQQLSNN) form a coiled coil.

The protein belongs to the WXG100 family. sagEsxA-like subfamily. As to quaternary structure, forms both homodimers and heterodimers with EsxC.

The protein resides in the secreted. Functionally, virulence factor that is important for the establishment of infection in the host. EsxA is required for EsxB synthesis as well as secretion. Modulates host cell apoptotic pathways and mediates together with EsxB the release of S.aureus from the host cell. By acting on apoptosis, plays a role in the modulation of dendritic cell-mediated immunity. This Staphylococcus aureus (strain USA300) protein is Type VII secretion system extracellular protein A.